A 407-amino-acid polypeptide reads, in one-letter code: Betaine--homocysteine S-methyltransferase 1 (407 aa).

A Hcy-binding domain is found at 11–314 (KGILERLNSG…YHIRAIAEEL (304 aa)). N6-succinyllysine occurs at positions 40, 93, and 98. Cysteine 217 lines the Zn(2+) pocket. 2 positions are modified to N6-succinyllysine: lysine 232 and lysine 241. 2 residues coordinate Zn(2+): cysteine 299 and cysteine 300. At serine 330 the chain carries Phosphoserine. An N6-succinyllysine mark is found at lysine 340 and lysine 377.

Homotetramer. Requires Zn(2+) as cofactor.

It is found in the cytoplasm. It localises to the cytosol. The protein localises to the nucleus. It carries out the reaction L-homocysteine + glycine betaine = N,N-dimethylglycine + L-methionine. It participates in amine and polyamine degradation; betaine degradation; sarcosine from betaine: step 1/2. Its pathway is amino-acid biosynthesis; L-methionine biosynthesis via de novo pathway; L-methionine from L-homocysteine (BhmT route): step 1/1. Functionally, involved in the regulation of homocysteine metabolism. Converts betaine and homocysteine to dimethylglycine and methionine, respectively. This reaction is also required for the irreversible oxidation of choline. The sequence is that of Betaine--homocysteine S-methyltransferase 1 (BHMT) from Bos taurus (Bovine).